Reading from the N-terminus, the 451-residue chain is Uronate isomerase (451 aa).

The protein belongs to the metallo-dependent hydrolases superfamily. Uronate isomerase family.

It carries out the reaction D-glucuronate = D-fructuronate. It catalyses the reaction aldehydo-D-galacturonate = keto-D-tagaturonate. Its pathway is carbohydrate metabolism; pentose and glucuronate interconversion. The chain is Uronate isomerase from Thermotoga petrophila (strain ATCC BAA-488 / DSM 13995 / JCM 10881 / RKU-1).